We begin with the raw amino-acid sequence, 87 residues long: Large ribosomal subunit protein bL27 (87 aa).

Residues 1-21 are disordered; that stretch reads MAHKKGQGSTQNNRDSAGRRL.

It belongs to the bacterial ribosomal protein bL27 family.

The chain is Large ribosomal subunit protein bL27 from Nautilia profundicola (strain ATCC BAA-1463 / DSM 18972 / AmH).